Here is a 208-residue protein sequence, read N- to C-terminus: MARYTGSLCRLCRRESMKMFLKGTRCYTEKCAFERRKYPPGQHGHNRGKLSDYGLQLREKQKVKRIYGVMERQFKNYFEKATKMKGVTGENLLKLLERRLDNVIYRMGFAMNRRQARQLVRHGYFTVNGKKVDIPSYLVRPGDIIEIVQSGKELEIIKESLALAEQRGFPVWLEVNAEEMKGKFVRLPEREEMQLPVQEQLIVEFYSK.

Residues R98–L161 form the S4 RNA-binding domain.

The protein belongs to the universal ribosomal protein uS4 family. In terms of assembly, part of the 30S ribosomal subunit. Contacts protein S5. The interaction surface between S4 and S5 is involved in control of translational fidelity.

Its function is as follows. One of the primary rRNA binding proteins, it binds directly to 16S rRNA where it nucleates assembly of the body of the 30S subunit. With S5 and S12 plays an important role in translational accuracy. The polypeptide is Small ribosomal subunit protein uS4 (Thermodesulfovibrio yellowstonii (strain ATCC 51303 / DSM 11347 / YP87)).